We begin with the raw amino-acid sequence, 362 residues long: 5'-tyrosyl-DNA phosphodiesterase (362 aa).

The segment covering 1–10 (MSNSDDEIQE) has biased composition (acidic residues). Residues 1-43 (MSNSDDEIQEIEAKRQKMSQEDSEVEIEILDEPEQGKLKNSSM) form a disordered region. Residues 11–20 (IEAKRQKMSQ) show a composition bias toward basic and acidic residues. The segment covering 21–33 (EDSEVEIEILDEP) has biased composition (acidic residues). Residues 126 to 130 (NIDGL) form an interaction with 5' end of substrate DNA region. Aspartate 128 and glutamate 158 together coordinate Mg(2+). The interval 232–237 (HLESTR) is interaction with 5' end of substrate DNA. Aspartate 271 acts as the Proton donor/acceptor in catalysis. Residues 273–275 (NLR) form an interaction with 5' end of substrate DNA region.

Belongs to the CCR4/nocturin family. TTRAP/TDP2 subfamily. Interacts with mxl-1; the interaction promotes axon regeneration after injury. Interacts with ets-4; the interaction is required for the sumoylation of ets-4. The cofactor is Mg(2+). It depends on Mn(2+) as a cofactor.

Its subcellular location is the nucleus. The protein localises to the PML body. DNA repair enzyme that can remove a variety of covalent adducts from DNA through hydrolysis of a 5'-phosphodiester bond, giving rise to DNA with a free 5' phosphate. Catalyzes the hydrolysis of dead-end complexes between DNA and the topoisomerase 2 (top2) active site tyrosine residue. Hydrolyzes 5'-phosphoglycolates on protruding 5' ends on DNA double-strand breaks (DSBs) due to DNA damage by radiation and free radicals. Inhibits axon regeneration after neuronal injury by promoting the sumoylation of ets-4, thereby inhibiting the phosphorylation of ets-4 required for probable interaction with cebp-1 and activation of svh-2 expression. The sequence is that of 5'-tyrosyl-DNA phosphodiesterase from Caenorhabditis elegans.